The primary structure comprises 31 residues: Protein YmiC (31 aa).

Residues 9–29 (WSWMGAFSLSMLFWAELLWII) form a helical membrane-spanning segment.

It localises to the cell inner membrane. The sequence is that of Protein YmiC from Escherichia coli (strain K12).